Consider the following 243-residue polypeptide: Uba3-binding protein but1 (243 aa).

Residues 28–50 (KSTKKRRSSTKDEETRGMHPHIK) are disordered.

Homodimer. Interacts with but2 and uba3.

The protein localises to the nucleus. Acts as a negative regulator of the NEDD8 pathway. Has a role in meiosis. This is Uba3-binding protein but1 (but1) from Schizosaccharomyces pombe (strain 972 / ATCC 24843) (Fission yeast).